The primary structure comprises 119 residues: Ribonuclease P protein component (119 aa).

It belongs to the RnpA family. In terms of assembly, consists of a catalytic RNA component (M1 or rnpB) and a protein subunit.

The catalysed reaction is Endonucleolytic cleavage of RNA, removing 5'-extranucleotides from tRNA precursor.. Functionally, RNaseP catalyzes the removal of the 5'-leader sequence from pre-tRNA to produce the mature 5'-terminus. It can also cleave other RNA substrates such as 4.5S RNA. The protein component plays an auxiliary but essential role in vivo by binding to the 5'-leader sequence and broadening the substrate specificity of the ribozyme. The protein is Ribonuclease P protein component of Streptococcus pyogenes serotype M5 (strain Manfredo).